The following is a 201-amino-acid chain: 3-isopropylmalate dehydratase small subunit (201 aa).

It belongs to the LeuD family. LeuD type 1 subfamily. Heterodimer of LeuC and LeuD.

The catalysed reaction is (2R,3S)-3-isopropylmalate = (2S)-2-isopropylmalate. It functions in the pathway amino-acid biosynthesis; L-leucine biosynthesis; L-leucine from 3-methyl-2-oxobutanoate: step 2/4. In terms of biological role, catalyzes the isomerization between 2-isopropylmalate and 3-isopropylmalate, via the formation of 2-isopropylmaleate. This Rhodopseudomonas palustris (strain HaA2) protein is 3-isopropylmalate dehydratase small subunit.